A 456-amino-acid polypeptide reads, in one-letter code: Cytochrome c biogenesis protein CcsB (456 aa).

3 helical membrane passes run 29 to 49 (LRLA…GTVI), 88 to 108 (AGWF…CTFR), and 174 to 194 (VGPI…IWGS).

Belongs to the Ccs1/CcsB family. In terms of assembly, may interact with CcsA.

The protein localises to the cellular thylakoid membrane. Its function is as follows. Required during biogenesis of c-type cytochromes (cytochrome c6 and cytochrome f) at the step of heme attachment. This is Cytochrome c biogenesis protein CcsB from Synechococcus sp. (strain ATCC 27144 / PCC 6301 / SAUG 1402/1) (Anacystis nidulans).